Here is a 136-residue protein sequence, read N- to C-terminus: uncharacterized protein (136 aa).

The chain crosses the membrane as a helical span at residues 40 to 62 (LFYSISLCVSLLLHISLCVSVYV).

The protein resides in the membrane. This is an uncharacterized protein from Homo sapiens (Human).